The chain runs to 478 residues: Probable cytosolic Fe-S cluster assembly factor CPIJ010948 (478 aa).

C23, C69, C72, C75, C189, C245, C396, and C400 together coordinate [4Fe-4S] cluster.

It belongs to the NARF family.

Its function is as follows. Component of the cytosolic iron-sulfur (Fe/S) protein assembly machinery. Required for maturation of extramitochondrial Fe/S proteins. This chain is Probable cytosolic Fe-S cluster assembly factor CPIJ010948, found in Culex quinquefasciatus (Southern house mosquito).